The following is a 45-amino-acid chain: Osteocalcin (45 aa).

The 44-residue stretch at 1–44 folds into the Gla domain; it reads AGTAXGDLTPFQLESLREVCEVNLACEHMADTXGIVAAYTAYYG. The Ca(2+) site is built by Glu14, Glu18, Glu21, and Glu27. 3 positions are modified to 4-carboxyglutamate: Glu14, Glu18, and Glu21. A disulfide bridge connects residues Cys20 and Cys26.

This sequence belongs to the osteocalcin/matrix Gla protein family. In terms of processing, gamma-carboxyglutamate residues are formed by vitamin K dependent carboxylation by GGCX. These residues are essential for the binding of calcium.

The protein localises to the secreted. Its function is as follows. The carboxylated form is one of the main organic components of the bone matrix, which constitutes 1-2% of the total bone protein. The carboxylated form binds strongly to apatite and calcium. This chain is Osteocalcin (bglap), found in Danio rerio (Zebrafish).